A 361-amino-acid polypeptide reads, in one-letter code: Caffeic acid 3-O-methyltransferase 1 (361 aa).

Residue 128–134 participates in substrate binding; the sequence is MNQDKVL. Residues 160–178 form a substrate binding region; that stretch reads AFEYHGTDPRFNKVFNQGM. Residues glycine 206, aspartate 229, aspartate 249, methionine 250, and lysine 263 each coordinate S-adenosyl-L-methionine. Histidine 267 (proton acceptor) is an active-site residue.

Belongs to the class I-like SAM-binding methyltransferase superfamily. Cation-independent O-methyltransferase family. COMT subfamily. In terms of assembly, homodimer.

It carries out the reaction (E)-caffeate + S-adenosyl-L-methionine = (E)-ferulate + S-adenosyl-L-homocysteine + H(+). It functions in the pathway aromatic compound metabolism; phenylpropanoid biosynthesis. Catalyzes the conversion of caffeic acid to ferulic acid and of 5-hydroxyferulic acid to sinapic acid. The resulting products may subsequently be converted to the corresponding alcohols that are incorporated into lignins. The protein is Caffeic acid 3-O-methyltransferase 1 (COMT1) of Ocimum basilicum (Sweet basil).